We begin with the raw amino-acid sequence, 316 residues long: MSKRKVAIIGSGNIGTDLMIKILRHGQHLEMAVMVGIDPQSDGLARARRMGVATTHEGVIGLMNMPEFADIDIVFDATSAGAHVKNDAALREAKPDIRLIDLTPAAIGPYCVPVVNLEANVDQLNVNMVTCGGQATIPMVAAVSRVARVHYAEIIASIASKSAGPGTRANIDEFTETTSRAIEVVGGAAKGKAIIVLNPAEPPLMMRDTVYVLSDEASQDDIEASINEMAEAVQAYVPGYRLKQRVQFEVIPQDKPVNLPGVGQFSGLKTAVWLEVEGAAHYLPAYAGNLDIMTSSALATAEKMAQSLARKAGEAA.

11–14 (SGNI) is a binding site for NAD(+). Residue Cys131 is the Acyl-thioester intermediate of the active site. NAD(+) contacts are provided by residues 162 to 170 (SAGPGTRAN) and Asn289.

Belongs to the acetaldehyde dehydrogenase family. In terms of assembly, interacts with MhpE.

The enzyme catalyses acetaldehyde + NAD(+) + CoA = acetyl-CoA + NADH + H(+). It participates in aromatic compound metabolism; 3-phenylpropanoate degradation. Catalyzes the conversion of acetaldehyde to acetyl-CoA, using NAD(+) and coenzyme A. Is the final enzyme in the meta-cleavage pathway for the degradation of aromatic compounds. In Shigella sonnei (strain Ss046), this protein is Acetaldehyde dehydrogenase.